Reading from the N-terminus, the 2542-residue chain is Highly reducing polyketide synthase (2542 aa).

The 429-residue stretch at 7–435 folds into the Ketosynthase family 3 (KS3) domain; it reads PEPIAIVGMA…GANAHAILDA (429 aa). Active-site for beta-ketoacyl synthase activity residues include Cys-182, His-317, and His-357. Positions 545–872 constitute a Malonyl-CoA:ACP transacylase (MAT) domain; that stretch reads FVFTGQGAQW…NLVGSLFLSG (328 aa). The interval 927–1062 is N-terminal hotdog fold; sequence HDLLGSRIPG…TTNETLRINS (136 aa). The region spanning 927-1224 is the PKS/mFAS DH domain; it reads HDLLGSRIPG…FLSLETATKE (298 aa). His-959 acts as the Proton acceptor; for dehydratase activity in catalysis. The interval 1072–1224 is C-terminal hotdog fold; that stretch reads NKDSYVRRWY…FLSLETATKE (153 aa). Catalysis depends on Asp-1137, which acts as the Proton donor; for dehydratase activity. Residues 1275–1574 are methyltransferase (CMet) domain; sequence LTQLAIRSVV…AGADIMLDDY (300 aa). The segment at 1606–1634 is disordered; that stretch reads VNGTNGINSTNSVNVTNDTSGINDTNRMN. In terms of domain architecture, Enoyl reductase (ER) spans 1866–2186; it reads GKANSFYFES…QGDSVGSVVL (321 aa). Residues 2209–2389 form the Ketoreductase (KR) domain; sequence ASYLLVGCLG…QAMSMALGMI (181 aa).

The cofactor is pantetheine 4'-phosphate.

It functions in the pathway antifungal biosynthesis. Its function is as follows. Highly reducing polyketide synthase; part of the gene cluster that mediates the biosynthesis of the tetrahydropyranyl antifungal agent lanomycin that acts as an inhibitor of CYP51 and blocks the ergosterol biosynthesis. The biosynthesis probably begins with the formation of an hexaketide, followed by methionine mediated alkylation of C-2 and C-6, and methylation of the reduced C-3 oxygen, pyran forming reductive ring closure, oxygenation of C-4, beta-keto reduction, enoyl reduction and dehydration of the remaining oxygens, and finally, acylation with glycine to complete the biosynthesis. The chain is Highly reducing polyketide synthase from Pyrenophora dematioidea (Helminthosporium dematioideum).